Reading from the N-terminus, the 1220-residue chain is Plasma membrane calcium-transporting ATPase 1 (1220 aa).

At Gly2 the chain carries N-acetylglycine. Residues 2–105 (GDMANNSVAY…KTFLQLVWEA (104 aa)) are Cytoplasmic-facing. Ser8 and Ser17 each carry phosphoserine. A helical transmembrane segment spans residues 106 to 126 (LQDVTLIILEIAAIVSLGLSF). At 127-154 (YQPPEGDNALCGEVSVGEEEGEGETGWI) the chain is on the extracellular side. Residues 155-175 (EGAAILLSVVCVVLVTAFNDW) traverse the membrane as a helical segment. The Cytoplasmic segment spans residues 176–366 (SKEKQFRGLQ…KEKSVLQGKL (191 aa)). The segment at 297–356 (EEEKKDEKKKEKKNKKQDGAIENRNKAKAQDGAAMEMQPLKSEEGGDGDEKDKKKANLPK) is disordered. Composition is skewed to basic and acidic residues over residues 312–325 (KQDG…KAKA) and 337–356 (KSEE…NLPK). Ser338 bears the Phosphoserine mark. Residues 367 to 386 (TKLAVQIGKAGLLMSAITVI) form a helical membrane-spanning segment. Over 387-418 (ILVLYFVIDTFWVQKRPWLAECTPIYIQYFVK) the chain is Extracellular. A helical membrane pass occupies residues 419-439 (FFIIGVTVLVVAVPEGLPLAV). Residues 440 to 855 (TISLAYSVKK…RNVYDSISKF (416 aa)) lie on the Cytoplasmic side of the membrane. Catalysis depends on Asp475, which acts as the 4-aspartylphosphate intermediate. Positions 475, 477, and 797 each coordinate Mg(2+). A helical transmembrane segment spans residues 856–876 (LQFQLTVNVVAVIVAFTGACI). At 877–882 (TQDSPL) the chain is on the extracellular side. Residues 883–903 (KAVQMLWVNLIMDTLASLALA) form a helical membrane-spanning segment. Topologically, residues 904 to 927 (TEPPTESLLLRKPYGRNKPLISRT) are cytoplasmic. Residues 928-948 (MMKNILGHAFYQLVVVFTLLF) traverse the membrane as a helical segment. Over 949–971 (AGEKFFDIDSGRNAPLHAPPSEH) the chain is Extracellular. A helical transmembrane segment spans residues 972 to 991 (YTIVFNTFVLMQLFNEINAR). The Cytoplasmic segment spans residues 992 to 1005 (KIHGERNVFEGIFN). The chain crosses the membrane as a helical span at residues 1006–1027 (NAIFCTIVLGTFVVQIIIVQFG). At 1028-1039 (GKPFSCSELSIE) the chain is on the extracellular side. The helical transmembrane segment at 1040-1060 (QWLWSIFLGMGTLLWGQLIST) threads the bilayer. Residues 1061-1220 (IPTSRLKFLK…SPLHSLETSL (160 aa)) lie on the Cytoplasmic side of the membrane. A calmodulin-binding subdomain A region spans residues 1100 to 1117 (LRRGQILWFRGLNRIQTQ). Thr1116 is subject to Phosphothreonine; by PKC. Residues 1118–1220 (IRVVNAFRSS…SPLHSLETSL (103 aa)) are required for basolateral membrane targeting. Phosphoserine is present on residues Ser1140 and Ser1155. The segment at 1160–1220 (PLIDDTDAED…SPLHSLETSL (61 aa)) is disordered. Thr1165 carries the post-translational modification Phosphothreonine. Ser1178 is modified (phosphoserine; by PKA). Ser1182 carries the post-translational modification Phosphoserine. Over residues 1200 to 1220 (MNKSATSSSPGSPLHSLETSL) the composition is skewed to polar residues.

The protein belongs to the cation transport ATPase (P-type) (TC 3.A.3) family. Type IIB subfamily. Monomer. Dimer. Oligomer. Calmodulin binding. Interacts with PDZD11. Interacts with SLC35G1 and STIM1; inhibits calcium-transporting ATPase activity after store depletion. Interacts with YWHAE; interacts with the monomeric and dimeric forms of the YWHAE but prefer the monomer form; this interaction inhibits calcium-transporting ATPase activity. Interacts with NPTN; this interaction stabilizes ATP2B1 and increases ATPase activity; this interaction controls T cell calcium homeostasis following T cell activation. Interacts with EPB41; regulates small intestinal calcium absorption through regulation of membrane expression of ATP2B1. Isoform B: Ubiquitously expressed. Isoform C: Found in brain cortex, skeletal muscle and heart muscle. Isoform D: Has only been found in fetal skeletal muscle. Isoform K: Found in small intestine and liver. Abundantly expressed in the endometrial epithelial cells and glandular epithelial cells in early-proliferative phase and early-secretory phases.

It is found in the cell membrane. Its subcellular location is the basolateral cell membrane. It localises to the synapse. The protein resides in the presynaptic cell membrane. The protein localises to the cytoplasmic vesicle. It is found in the secretory vesicle. Its subcellular location is the synaptic vesicle membrane. It carries out the reaction Ca(2+)(in) + ATP + H2O = Ca(2+)(out) + ADP + phosphate + H(+). Catalyzes the hydrolysis of ATP coupled with the transport of calcium from the cytoplasm to the extracellular space thereby maintaining intracellular calcium homeostasis. Plays a role in blood pressure regulation through regulation of intracellular calcium concentration and nitric oxide production leading to regulation of vascular smooth muscle cells vasoconstriction. Positively regulates bone mineralization through absorption of calcium from the intestine. Plays dual roles in osteoclast differentiation and survival by regulating RANKL-induced calcium oscillations in preosteoclasts and mediating calcium extrusion in mature osteoclasts. Regulates insulin sensitivity through calcium/calmodulin signaling pathway by regulating AKT1 activation and NOS3 activation in endothelial cells. May play a role in synaptic transmission by modulating calcium and proton dynamics at the synaptic vesicles. The polypeptide is Plasma membrane calcium-transporting ATPase 1 (Homo sapiens (Human)).